The following is a 385-amino-acid chain: GDP-mannose-dependent alpha-(1-6)-phosphatidylinositol monomannoside mannosyltransferase (385 aa).

GDP-alpha-D-mannose-binding residues include arginine 205, lysine 210, valine 262, and glutamate 299.

The protein belongs to the glycosyltransferase group 1 family. Glycosyltransferase 4 subfamily.

The enzyme catalyses a 1,2-diacyl-sn-glycero-3-phospho-[alpha-D-mannopyranosyl-(1&lt;-&gt;6)-D-myo-inositol] + GDP-alpha-D-mannose = a 2,6-O-bis(alpha-D-mannopyranosyl)-1-phosphatidyl-1D-myo-inositol + GDP + H(+). It catalyses the reaction a 1,2-diacyl-sn-glycero-3-phospho-[alpha-D-6-acyl-mannopyranosyl-(1&lt;-&gt;6)-D-myo-inositol] + GDP-alpha-D-mannose = a 2-O-(alpha-D-mannosyl)-6-O-(6-O-acyl-alpha-D-mannosyl)-1-phosphatidyl-1D-myo-inositol + GDP + H(+). It functions in the pathway phospholipid metabolism; phosphatidylinositol metabolism. Involved in the biosynthesis of phosphatidyl-myo-inositol mannosides (PIM) which are early precursors in the biosynthesis of lipomannans (LM) and lipoarabinomannans (LAM). Catalyzes the addition of a mannosyl residue from GDP-D-mannose (GDP-Man) to the position 6 of a phosphatidyl-myo-inositol bearing an alpha-1,2-linked mannose residue (PIM1) to generate phosphatidyl-myo-inositol bearing alpha-1,2- and alpha-1,6-linked mannose residues (Ac1PIM2). PimB also catalyzes the addition of a mannosyl residue from GDP-Man to the position 6 of phosphatidyl-myo-inositol bearing an acylated alpha-1,2-linked mannose residue (Ac1PIM1) to generate monoacylated phosphatidyl-myo-inositol bearing alpha-1,2- and alpha-1,6-linked mannose residues (Ac1PIM2). The addition of the second mannosyl residue by PimB preferentially occurs before the acylation of the mannosyl residue transferred by PimA. Also able to transfer a mannosyl residue from GDP-Man to the position 6 of a phosphatidyl-myo-inositol (PI), but this reaction is very slow. This is GDP-mannose-dependent alpha-(1-6)-phosphatidylinositol monomannoside mannosyltransferase from Mycobacterium tuberculosis (strain CDC 1551 / Oshkosh).